A 280-amino-acid polypeptide reads, in one-letter code: MKQVFGVFGDPVGHSLSPAMHNAAFSALGMDCIYHAFRVTPEKLEKAILGAEAMGFGGINLTVPLKEKALKLDFVKPDPLAKRIGAVNTLVFGKKGDIQGYNTDGPGAKQALLDTGVEIRGSRMVVAGAGGAARAVAFQLAADGADITVINRTEERAVGLAREISAADLPGKIRGTGLSGLKELLRDADVLINTTTLGMHPNTDATIVTAEELHSGLTVFDIVYNPLETRLLREARTSGAKTISGVLMLVYQGAEAFRLWTGVEPPLELMKKTVLEALQA.

Shikimate-binding positions include 15–17 (SLS) and Thr-62. Residue Lys-66 is the Proton acceptor of the active site. The shikimate site is built by Asn-88 and Asp-104. NADP(+) is bound by residues 128–132 (GAGGA), 151–156 (NRTEER), and Ile-222. Shikimate is bound at residue Tyr-224. Gly-245 contacts NADP(+).

Belongs to the shikimate dehydrogenase family. Homodimer.

It carries out the reaction shikimate + NADP(+) = 3-dehydroshikimate + NADPH + H(+). It functions in the pathway metabolic intermediate biosynthesis; chorismate biosynthesis; chorismate from D-erythrose 4-phosphate and phosphoenolpyruvate: step 4/7. Involved in the biosynthesis of the chorismate, which leads to the biosynthesis of aromatic amino acids. Catalyzes the reversible NADPH linked reduction of 3-dehydroshikimate (DHSA) to yield shikimate (SA). In Methanosarcina mazei (strain ATCC BAA-159 / DSM 3647 / Goe1 / Go1 / JCM 11833 / OCM 88) (Methanosarcina frisia), this protein is Shikimate dehydrogenase (NADP(+)).